Reading from the N-terminus, the 160-residue chain is Peptide methionine sulfoxide reductase MsrA (160 aa).

The active site involves C11.

This sequence belongs to the MsrA Met sulfoxide reductase family.

It catalyses the reaction L-methionyl-[protein] + [thioredoxin]-disulfide + H2O = L-methionyl-(S)-S-oxide-[protein] + [thioredoxin]-dithiol. It carries out the reaction [thioredoxin]-disulfide + L-methionine + H2O = L-methionine (S)-S-oxide + [thioredoxin]-dithiol. Has an important function as a repair enzyme for proteins that have been inactivated by oxidation. Catalyzes the reversible oxidation-reduction of methionine sulfoxide in proteins to methionine. The polypeptide is Peptide methionine sulfoxide reductase MsrA (Malacoplasma penetrans (strain HF-2) (Mycoplasma penetrans)).